The sequence spans 547 residues: Malolactic enzyme (547 aa).

Tyr92 serves as the catalytic Proton donor. Catalysis depends on Lys165, which acts as the Proton acceptor. Lys165 contacts substrate. Mn(2+)-binding residues include Glu236, Asp237, and Asp260. NAD(+) contacts are provided by residues 293–296, Asn405, and Asn450; that span reads AGTA. Asn450 serves as a coordination point for substrate.

It belongs to the malic enzymes family. In terms of assembly, homodimer. Mn(2+) serves as cofactor. It depends on NAD(+) as a cofactor.

The enzyme catalyses (S)-malate + H(+) = (S)-lactate + CO2. Its function is as follows. Involved in the malolactic fermentation (MLF) of wine, which results in a natural decrease in acidity and favorable changes in wine flavors. Catalyzes the decarboxylation of L-malate to L-lactate. The chain is Malolactic enzyme from Lactiplantibacillus plantarum (strain ATCC BAA-793 / NCIMB 8826 / WCFS1) (Lactobacillus plantarum).